The primary structure comprises 260 residues: Taurine import ATP-binding protein TauB (260 aa).

Residues 6-235 enclose the ABC transporter domain; sequence AQQVSVVYAS…RYAHGEPMRS (230 aa). 40–47 contributes to the ATP binding site; sequence GASGCGKS.

Belongs to the ABC transporter superfamily. Taurine importer (TC 3.A.1.17.1) family. As to quaternary structure, the complex is composed of two ATP-binding proteins (TauB), two transmembrane proteins (TauC) and a solute-binding protein (TauA).

It localises to the cell inner membrane. The enzyme catalyses taurine(out) + ATP + H2O = taurine(in) + ADP + phosphate + H(+). Part of the ABC transporter complex TauABC involved in taurine import. Responsible for energy coupling to the transport system. The polypeptide is Taurine import ATP-binding protein TauB (Burkholderia pseudomallei (strain 1710b)).